The primary structure comprises 468 residues: RuvB-like helicase 2 (468 aa).

ATP is bound at residue 76 to 83; that stretch reads GPPSTGKT.

This sequence belongs to the RuvB family. In terms of assembly, may form heterododecamers with RVB1. Component of the SWR1 chromatin remodeling complex, the INO80 chromatin remodeling complex, and of the R2TP complex.

It localises to the nucleus. It catalyses the reaction ATP + H2O = ADP + phosphate + H(+). In terms of biological role, DNA helicase which participates in several chromatin remodeling complexes, including the SWR1 and the INO80 complexes. The SWR1 complex mediates the ATP-dependent exchange of histone H2A for the H2A variant HZT1 leading to transcriptional regulation of selected genes by chromatin remodeling. The INO80 complex remodels chromatin by shifting nucleosomes and is involved in DNA repair. Also involved in pre-rRNA processing. This Emericella nidulans (strain FGSC A4 / ATCC 38163 / CBS 112.46 / NRRL 194 / M139) (Aspergillus nidulans) protein is RuvB-like helicase 2 (rvb2).